The sequence spans 390 residues: HIT domain-containing protein DDB_G0272839 (390 aa).

Residues 168–201 (DNENEKEKEKEMELDNDNTNTESIPPITSKSTST) form a disordered region. Residues 184–201 (DNTNTESIPPITSKSTST) are compositionally biased toward low complexity. The HIT domain maps to 232 to 343 (YFCNKPESFL…ISNDYNTKYL (112 aa)).

The chain is HIT domain-containing protein DDB_G0272839 from Dictyostelium discoideum (Social amoeba).